A 941-amino-acid chain; its full sequence is Endoglucanase (941 aa).

The first 29 residues, 1 to 29, serve as a signal peptide directing secretion; the sequence is MKIKQIKQSLSLLLIITLIMSLFVPMASA. 3 SLH domains span residues 37–94, 95–158, and 161–224; these read NAFP…GLEA, SSKD…LSLP, and QREY…DYLY. Glu373 functions as the Proton donor in the catalytic mechanism. Residue Glu485 is the Nucleophile of the active site.

The protein belongs to the glycosyl hydrolase 5 (cellulase A) family.

The catalysed reaction is Endohydrolysis of (1-&gt;4)-beta-D-glucosidic linkages in cellulose, lichenin and cereal beta-D-glucans.. The sequence is that of Endoglucanase from Bacillus sp. (strain KSM-635).